Consider the following 483-residue polypeptide: Glycogen synthase (483 aa).

K18 is an ADP-alpha-D-glucose binding site.

The protein belongs to the glycosyltransferase 1 family. Bacterial/plant glycogen synthase subfamily.

The catalysed reaction is [(1-&gt;4)-alpha-D-glucosyl](n) + ADP-alpha-D-glucose = [(1-&gt;4)-alpha-D-glucosyl](n+1) + ADP + H(+). The protein operates within glycan biosynthesis; glycogen biosynthesis. In terms of biological role, synthesizes alpha-1,4-glucan chains using ADP-glucose. The polypeptide is Glycogen synthase (Rhodopseudomonas palustris (strain TIE-1)).